Here is a 794-residue protein sequence, read N- to C-terminus: E3 ubiquitin-protein ligase wwp-1 (794 aa).

Over residues 1–16 the composition is skewed to low complexity; it reads MARNEPSSQQPSSSGS. 2 disordered regions span residues 1–31 and 155–198; these read MARNEPSSQQPSSSGSNGTPAQQNGSAKPSK and RSAG…AAPT. A C2 domain is found at 10-124; it reads QPSSSGSNGT…TRNENGEFKN (115 aa). Polar residues predominate over residues 17 to 27; the sequence is NGTPAQQNGSA. Positions 161–186 are enriched in low complexity; it reads AETAASASSEASTSNGVATSSSARRP. WW domains follow at residues 219 to 252, 253 to 286, 324 to 358, and 366 to 399; these read EQLPDGWEMRFDQYGRKYYVDHTTKSTTWERPST, QPLPQGWEMRRDPRGRVYYVDHNTRTTTWQRPTA, GPLPEGWEKRQDPNTSRMYFVNHVNRTTQWEDPRT, and QPLPDGWEMRFTEQGVPFFIDHQSKTTTYNDPRT. One can recognise an HECT domain in the interval 460–794; that stretch reads NAVDLRRRLY…IEMTEGFGNE (335 aa). Cysteine 762 acts as the Glycyl thioester intermediate in catalysis.

Interacts (via WW domains) with Kruppel-like factor klf-1. Interacts with ubiquitin-conjugating enzyme E2 ubc-18. As to expression, expressed in neurons localized in the head and tail of adults.

The catalysed reaction is S-ubiquitinyl-[E2 ubiquitin-conjugating enzyme]-L-cysteine + [acceptor protein]-L-lysine = [E2 ubiquitin-conjugating enzyme]-L-cysteine + N(6)-ubiquitinyl-[acceptor protein]-L-lysine.. It functions in the pathway protein modification; protein ubiquitination. In terms of biological role, E3 ubiquitin-protein ligase which accepts ubiquitin from an E2 ubiquitin-conjugating enzyme in the form of a thioester and then directly transfers the ubiquitin to targeted substrates. Ubiquitinates klf-1. Required for diet restriction-mediated lifespan extension, acting in concert with Kruppel-like factor klf-1 in the intestine to perhaps modulate genes involved in lipid metabolism. Probably acting downstream of the Insulin/IGF-1-like signaling (IIS) mediated pathway, plays a role in the immune response to infection by the Gram-negative bacterium P.aeruginosa, at least partly in response to bacterial pore-forming toxins. This is E3 ubiquitin-protein ligase wwp-1 from Caenorhabditis elegans.